A 464-amino-acid polypeptide reads, in one-letter code: Fumarate hydratase class II (464 aa).

Residues 96-98 (SGT), 127-130 (HPND), 137-139 (SSN), and Thr-185 each bind substrate. His-186 functions as the Proton donor/acceptor in the catalytic mechanism. Residue Ser-316 is part of the active site. Substrate contacts are provided by residues Ser-317 and 322–324 (KVN).

The protein belongs to the class-II fumarase/aspartase family. Fumarase subfamily. Homotetramer.

It localises to the cytoplasm. It carries out the reaction (S)-malate = fumarate + H2O. It functions in the pathway carbohydrate metabolism; tricarboxylic acid cycle; (S)-malate from fumarate: step 1/1. In terms of biological role, involved in the TCA cycle. Catalyzes the stereospecific interconversion of fumarate to L-malate. This Pseudomonas putida (strain ATCC 47054 / DSM 6125 / CFBP 8728 / NCIMB 11950 / KT2440) protein is Fumarate hydratase class II.